Reading from the N-terminus, the 201-residue chain is uncharacterized protein (201 aa).

This is an uncharacterized protein from Caenorhabditis elegans.